The following is a 172-amino-acid chain: Adenylate kinase isoenzyme 6 (172 aa).

5 residues coordinate ATP: G13, G15, K16, T17, and T18. The interval 33 to 56 is NMP; that stretch reads NVGDLAREEQLYDGYDEEYDCPIL. The segment at 33 to 56 is NMPbind; sequence NVGDLAREEQLYDGYDEEYDCPIL. The interval 108-118 is LID; the sequence is TRGYNEKKLTD. R109 and K148 together coordinate ATP.

It belongs to the adenylate kinase family. AK6 subfamily. As to quaternary structure, monomer and homodimer. Interacts with small ribosomal subunit protein uS11. Not a structural component of 43S pre-ribosomes, but transiently interacts with them by binding to uS11. Interacts with COIL (via C-terminus). In terms of tissue distribution, expressed in heart, brain, placenta, lung, liver, skeletal muscle, kidney, pancreas, chorionic villi and the central nervous system.

It is found in the cytoplasm. It localises to the nucleus. Its subcellular location is the nucleoplasm. The protein resides in the cajal body. It carries out the reaction AMP + ATP = 2 ADP. It catalyses the reaction ATP + H2O = ADP + phosphate + H(+). Functionally, broad-specificity nucleoside monophosphate (NMP) kinase that catalyzes the reversible transfer of the terminal phosphate group between nucleoside triphosphates and monophosphates. Also has ATPase activity. Involved in the late cytoplasmic maturation steps of the 40S ribosomal particles, specifically 18S rRNA maturation. While NMP activity is not required for ribosome maturation, ATPase activity is. Associates transiently with small ribosomal subunit protein uS11. ATP hydrolysis breaks the interaction with uS11. May temporarily remove uS11 from the ribosome to enable a conformational change of the ribosomal RNA that is needed for the final maturation step of the small ribosomal subunit. Its NMP activity may have a role in nuclear energy homeostasis. AMP and dAMP are the preferred substrates, but CMP and dCMP are also good substrates. IMP is phosphorylated to a much lesser extent. All nucleoside triphosphates ATP, GTP, UTP, CTP, dATP, dCTP, dGTP, and TTP are accepted as phosphate donors. CTP is the best phosphate donor, followed by UTP, ATP, GTP and dCTP. May be involved in regulation of Cajal body (CB) formation. In Homo sapiens (Human), this protein is Adenylate kinase isoenzyme 6.